Here is a 251-residue protein sequence, read N- to C-terminus: Triosephosphate isomerase (251 aa).

9 to 11 (NWK) contributes to the substrate binding site. His-95 serves as the catalytic Electrophile. Glu-167 functions as the Proton acceptor in the catalytic mechanism. Substrate contacts are provided by residues Gly-173, Ser-213, and 234–235 (GG).

It belongs to the triosephosphate isomerase family. Homodimer.

The protein localises to the cytoplasm. The enzyme catalyses D-glyceraldehyde 3-phosphate = dihydroxyacetone phosphate. It participates in carbohydrate biosynthesis; gluconeogenesis. The protein operates within carbohydrate degradation; glycolysis; D-glyceraldehyde 3-phosphate from glycerone phosphate: step 1/1. Its function is as follows. Involved in the gluconeogenesis. Catalyzes stereospecifically the conversion of dihydroxyacetone phosphate (DHAP) to D-glyceraldehyde-3-phosphate (G3P). The chain is Triosephosphate isomerase from Pelobacter propionicus (strain DSM 2379 / NBRC 103807 / OttBd1).